Consider the following 387-residue polypeptide: Succinate--CoA ligase [ADP-forming] subunit beta (387 aa).

An ATP-grasp domain is found at 9–244 (KEVLRKFGVA…LNEEEPSEIE (236 aa)). Residues Lys46, 53–55 (GRG), Glu99, Cys102, and Glu107 each bind ATP. Mg(2+) is bound by residues Asn199 and Asp213. Residues Asn264 and 321–323 (GIM) each bind substrate.

It belongs to the succinate/malate CoA ligase beta subunit family. Heterotetramer of two alpha and two beta subunits. Mg(2+) serves as cofactor.

It carries out the reaction succinate + ATP + CoA = succinyl-CoA + ADP + phosphate. It catalyses the reaction GTP + succinate + CoA = succinyl-CoA + GDP + phosphate. Its pathway is carbohydrate metabolism; tricarboxylic acid cycle; succinate from succinyl-CoA (ligase route): step 1/1. Its function is as follows. Succinyl-CoA synthetase functions in the citric acid cycle (TCA), coupling the hydrolysis of succinyl-CoA to the synthesis of either ATP or GTP and thus represents the only step of substrate-level phosphorylation in the TCA. The beta subunit provides nucleotide specificity of the enzyme and binds the substrate succinate, while the binding sites for coenzyme A and phosphate are found in the alpha subunit. The polypeptide is Succinate--CoA ligase [ADP-forming] subunit beta (Bdellovibrio bacteriovorus (strain ATCC 15356 / DSM 50701 / NCIMB 9529 / HD100)).